The primary structure comprises 375 residues: Cyclic AMP receptor 2 (375 aa).

Residues 1 to 10 (MTIMSDIIAQ) lie on the Extracellular side of the membrane. Residues 11 to 30 (RTILLIADFSSIIGCSLVLI) form a helical membrane-spanning segment. The Cytoplasmic portion of the chain corresponds to 31–44 (GFWRLKLLRNHITK). Residues 45–65 (IISLFCATSLFKDVISTIITL) form a helical membrane-spanning segment. At 66–82 (LYKPDQTESGFPCYLHA) the chain is on the extracellular side. A helical membrane pass occupies residues 83-108 (IVITFGSLACWLWTLMLSFSIYNLIV). Residues 109 to 119 (RREPEPERFEK) are Cytoplasmic-facing. A helical membrane pass occupies residues 120–138 (FYFCLCYGLPLISTIVMLS). Residues 139 to 161 (THIIQPVGGWCWIGDNYDGYRFG) lie on the Extracellular side of the membrane. Residues 162 to 180 (LFYGPFFFIWGTSAILVGL) form a helical membrane-spanning segment. Topologically, residues 181–204 (TSKYTYSVIRSSVSDNKDKHMTYQ) are cytoplasmic. Phosphoserine is present on S192. Residues 205 to 223 (FKLINYIVVFLVCWVFAIV) form a helical membrane-spanning segment. Over 224-234 (NRILNGLNQFP) the chain is Extracellular. The helical transmembrane segment at 235–259 (TVPNVLHTYFSVSHGFYASITFIYN) threads the bilayer. Topologically, residues 260–375 (NPLMWRYFGA…NNINNKNDMI (116 aa)) are cytoplasmic. Phosphoserine is present on residues S298 and S303. The tract at residues 338–375 (PKENENQNHHHHHHHHHHHNHYNNNNNNNNINNKNDMI) is disordered. A compositionally biased stretch (basic residues) spans 346–358 (HHHHHHHHHHHNH). The span at 359-375 (YNNNNNNNNINNKNDMI) shows a compositional bias: low complexity.

The protein belongs to the G-protein coupled receptor 5 family. C-terminal Ser or Thr residues may be phosphorylated.

It localises to the membrane. Its function is as follows. Receptor for cAMP. Coordinates the aggregation of individual cells into a multicellular organism and regulates the expression of a large number of developmentally regulated genes. The activity of this receptor is mediated by G proteins. Plays a key role during tip formation and late development; involved in cAMP-directed patterning of pre stalk cells as they sort before and during tip formation. This Dictyostelium discoideum (Social amoeba) protein is Cyclic AMP receptor 2 (carB).